Consider the following 208-residue polypeptide: Ribosomal RNA large subunit methyltransferase E (208 aa).

5 residues coordinate S-adenosyl-L-methionine: Gly62, Trp64, Asp82, Asp98, and Asp123. Lys163 serves as the catalytic Proton acceptor.

It belongs to the class I-like SAM-binding methyltransferase superfamily. RNA methyltransferase RlmE family.

The protein localises to the cytoplasm. It catalyses the reaction uridine(2552) in 23S rRNA + S-adenosyl-L-methionine = 2'-O-methyluridine(2552) in 23S rRNA + S-adenosyl-L-homocysteine + H(+). Specifically methylates the uridine in position 2552 of 23S rRNA at the 2'-O position of the ribose in the fully assembled 50S ribosomal subunit. This chain is Ribosomal RNA large subunit methyltransferase E, found in Glaesserella parasuis serovar 5 (strain SH0165) (Haemophilus parasuis).